The following is a 407-amino-acid chain: Imidazolonepropionase (407 aa).

2 residues coordinate Fe(3+): His68 and His70. Zn(2+)-binding residues include His68 and His70. Residues Arg77, Tyr140, and His173 each coordinate 4-imidazolone-5-propanoate. Tyr140 contacts N-formimidoyl-L-glutamate. His238 lines the Fe(3+) pocket. His238 is a binding site for Zn(2+). Gln241 is a binding site for 4-imidazolone-5-propanoate. Position 313 (Asp313) interacts with Fe(3+). Asp313 contributes to the Zn(2+) binding site. Positions 315 and 317 each coordinate N-formimidoyl-L-glutamate. Thr318 contacts 4-imidazolone-5-propanoate.

It belongs to the metallo-dependent hydrolases superfamily. HutI family. Zn(2+) is required as a cofactor. The cofactor is Fe(3+).

The protein resides in the cytoplasm. It catalyses the reaction 4-imidazolone-5-propanoate + H2O = N-formimidoyl-L-glutamate. The protein operates within amino-acid degradation; L-histidine degradation into L-glutamate; N-formimidoyl-L-glutamate from L-histidine: step 3/3. Functionally, catalyzes the hydrolytic cleavage of the carbon-nitrogen bond in imidazolone-5-propanoate to yield N-formimidoyl-L-glutamate. It is the third step in the universal histidine degradation pathway. The protein is Imidazolonepropionase of Burkholderia cenocepacia (strain ATCC BAA-245 / DSM 16553 / LMG 16656 / NCTC 13227 / J2315 / CF5610) (Burkholderia cepacia (strain J2315)).